Here is a 329-residue protein sequence, read N- to C-terminus: DNA-directed RNA polymerase subunit alpha (329 aa).

The alpha N-terminal domain (alpha-NTD) stretch occupies residues 1-235 (MQGSVIEFLK…EQLDAFVDLR (235 aa)). An alpha C-terminal domain (alpha-CTD) region spans residues 249–329 (FDPILLRPVD…NWPPASIAED (81 aa)).

This sequence belongs to the RNA polymerase alpha chain family. As to quaternary structure, homodimer. The RNAP catalytic core consists of 2 alpha, 1 beta, 1 beta' and 1 omega subunit. When a sigma factor is associated with the core the holoenzyme is formed, which can initiate transcription.

It catalyses the reaction RNA(n) + a ribonucleoside 5'-triphosphate = RNA(n+1) + diphosphate. Functionally, DNA-dependent RNA polymerase catalyzes the transcription of DNA into RNA using the four ribonucleoside triphosphates as substrates. The sequence is that of DNA-directed RNA polymerase subunit alpha from Haemophilus ducreyi (strain 35000HP / ATCC 700724).